We begin with the raw amino-acid sequence, 493 residues long: MASTVRPSFSLGNETLKVPLALFALNRQRLCERLRKNGAVQAASAVVLQGGEEMQRYCTDTSIIFRQESFFHWAFGVVESGCYGVIDVDTGKSTLFVPRLPDSYATWMGKIHSKEYFKEKYAVDDVQYTDEIASVLTSRNPSVLLTLRGVNTDSGSVCREASFEGISKFNVNNTILHPEIVECRVFKTDMELEVLRYTNRISSEAHREVMKAVKVGMKEYEMESLFQHYCYSRGGMRHTSYTCICCSGENAAVLHYGHAGAPNDRTIKDGDICLFDMGGEYYCFASDITCSFPANGKFTEDQKAIYEAVLRSCRTVMSTMKPGVWWPDMHRLADRIHLEELARIGLLSGSVDAMLQVHLGAVFMPHGLGHFLGLDVHDVGGYPEGVERIDEPGLRSLRTARHLEPGMVLTVEPGIYFIDHLLDQALADPAQACFFNQEVLQRFRNFGGVRIEEDVVVTDSGMELLTCVPRTVEEIEACMAGCDKASVPFSGQK.

A2 carries the post-translational modification N-acetylalanine. Residue S167 is modified to Phosphoserine. An a dipeptide-binding site is contributed by H255. Residues D276, D287, and H370 each contribute to the Mn(2+) site. Position 287 (D287) interacts with a dipeptide. Residues H377 and R398 each coordinate a dipeptide. Mn(2+) is bound by residues E412 and E452.

The protein belongs to the peptidase M24B family. Eukaryotic-type prolidase subfamily. Homodimer. The cofactor is Mn(2+).

It carries out the reaction Xaa-L-Pro dipeptide + H2O = an L-alpha-amino acid + L-proline. Functionally, dipeptidase that catalyzes the hydrolysis of dipeptides with a prolyl (Xaa-Pro) or hydroxyprolyl residue in the C-terminal position. The preferred dipeptide substrate is Gly-Pro, but other Xaa-Pro dipeptides, such as Ala-Pro, Met-Pro, Phe-Pro, Val-Pro and Leu-Pro, can be cleaved. Plays an important role in collagen metabolism because the high level of iminoacids in collagen. This is Xaa-Pro dipeptidase (Pepd) from Mus musculus (Mouse).